Reading from the N-terminus, the 410-residue chain is Probable serine/threonine-protein kinase PBL8 (410 aa).

Residues 1-10 show a composition bias toward basic and acidic residues; sequence MGNCGTRDEA. Residues 1 to 45 are disordered; it reads MGNCGTRDEAAVFTPQAQAQQLQKKHSRSVSDLSDPSTPRFRDDS. Gly-2 carries N-myristoyl glycine lipidation. Cys-4 carries S-palmitoyl cysteine lipidation. The residue at position 58 (Thr-58) is a Phosphothreonine. One can recognise a Protein kinase domain in the interval 69 to 350; the sequence is FRPDYILGEG…DVVETLEPLQ (282 aa). Residues 75 to 83 and Lys-104 each bind ATP; that span reads LGEGGFGTV. Tyr-149 is subject to Phosphotyrosine. Residue Asp-199 is the Proton acceptor of the active site. Phosphoserine occurs at positions 203 and 233. 2 positions are modified to phosphothreonine: Thr-234 and Thr-239. Residue Tyr-247 is modified to Phosphotyrosine.

It belongs to the protein kinase superfamily. Ser/Thr protein kinase family. In terms of assembly, interacts with the Xanthomonas campestris effector XopAC/AvrAC.

The protein resides in the cell membrane. It carries out the reaction L-seryl-[protein] + ATP = O-phospho-L-seryl-[protein] + ADP + H(+). The catalysed reaction is L-threonyl-[protein] + ATP = O-phospho-L-threonyl-[protein] + ADP + H(+). Functionally, may be involved in plant defense signaling. In Arabidopsis thaliana (Mouse-ear cress), this protein is Probable serine/threonine-protein kinase PBL8.